Here is an 842-residue protein sequence, read N- to C-terminus: Unconventional myosin-Ia (842 aa).

Residues 1-686 (GVEDLILLEP…TLFYLEEQRR (686 aa)) form the Myosin motor domain. 93–100 (GESGAGKT) contributes to the ATP binding site. The actin-binding stretch occupies residues 563-585 (VAILMKNLYSKNPNYIRCIKPND). 3 consecutive IQ domains span residues 689-712 (LQQL…YQQM), 713-733 (RKSQ…KHYG), and 735-764 (IRSS…SGAR).

This sequence belongs to the TRAFAC class myosin-kinesin ATPase superfamily. Myosin family. Phosphorylated by ALPK1.

In terms of biological role, involved in directing the movement of organelles along actin filaments. The polypeptide is Unconventional myosin-Ia (Myo1a) (Rattus norvegicus (Rat)).